We begin with the raw amino-acid sequence, 673 residues long: Kinesin-like protein KIFC1 (673 aa).

4 positions are modified to phosphoserine: serine 6, serine 26, serine 31, and serine 33. Disordered stretches follow at residues 23–94 (KAPS…TGPR) and 109–136 (VPAV…KRPA). Over residues 60–86 (TKITTSHPRVPSLTTVPQTQGQTTAQK) the composition is skewed to polar residues. The stretch at 142 to 306 (QLCDLNAELK…RRRLHNQLQE (165 aa)) forms a coiled coil. The region spanning 310-663 (NIRVFCRVRP…LRFASKVNQC (354 aa)) is the Kinesin motor domain. Residues 325–372 (PTPPPGLLLFPSGPGGPSDPPTRLSLSRSDERRGTLSGAPAPPTRHDF) are disordered. Threonine 359 carries the post-translational modification Phosphothreonine. ATP is bound at residue 410–417 (GQTGSGKT).

It belongs to the TRAFAC class myosin-kinesin ATPase superfamily. Kinesin family. NCD subfamily. As to quaternary structure, binds NUBP1 and NUBP2. Interacts with PPP1R42.

It is found in the nucleus. The protein resides in the cytoplasm. The protein localises to the cytoskeleton. Its subcellular location is the microtubule organizing center. It localises to the centrosome. It is found in the spindle. The protein resides in the early endosome. Functionally, minus end-directed microtubule-dependent motor required for bipolar spindle formation. May contribute to movement of early endocytic vesicles. Regulates cilium formation and structure. This chain is Kinesin-like protein KIFC1 (KIFC1), found in Homo sapiens (Human).